A 495-amino-acid polypeptide reads, in one-letter code: Ectonucleoside triphosphate diphosphohydrolase 2 (495 aa).

Residues 1-4 (MAGK) are Cytoplasmic-facing. The chain crosses the membrane as a helical span at residues 5-25 (LVSLVPPLLLAAVGLAGLLLL). Over 26–462 (CVPTQDVREP…PGLRKGTHFS (437 aa)) the chain is Extracellular. The N-linked (GlcNAc...) asparagine glycan is linked to N64. A disulfide bridge connects residues C75 and C99. N129 carries N-linked (GlcNAc...) asparagine glycosylation. Catalysis depends on E165, which acts as the Proton acceptor. Residue 204-208 (GASTQ) coordinates ATP. Disulfide bonds link C242–C284 and C265–C310. Residues N294 and N319 are each glycosylated (N-linked (GlcNAc...) asparagine). Cystine bridges form between C323–C328 and C377–C399. N378 and N443 each carry an N-linked (GlcNAc...) asparagine glycan. The chain crosses the membrane as a helical span at residues 463 to 483 (SWVALLLLFTVLILAALVLLL). The Cytoplasmic portion of the chain corresponds to 484 to 495 (RQVRSAKSPGAL).

This sequence belongs to the GDA1/CD39 NTPase family. Requires Ca(2+) as cofactor. Mg(2+) is required as a cofactor.

The protein resides in the cell membrane. Its function is as follows. In the nervous system, could hydrolyze ATP and other nucleotides to regulate purinergic neurotransmission. Hydrolyzes ADP only to a marginal extent. The polypeptide is Ectonucleoside triphosphate diphosphohydrolase 2 (Entpd2) (Mus musculus (Mouse)).